The chain runs to 104 residues: Flagellar hook-basal body complex protein FliE (104 aa).

This sequence belongs to the FliE family.

It localises to the bacterial flagellum basal body. The chain is Flagellar hook-basal body complex protein FliE from Enterobacter sp. (strain 638).